Reading from the N-terminus, the 146-residue chain is Hemoglobin subunit beta-1 (146 aa).

The 145-residue stretch at 2-146 (EWTDAEKSTI…VVAAMGSRYF (145 aa)) folds into the Globin domain. Residues H63 and H92 each contribute to the heme b site.

It belongs to the globin family. Heterotetramer of two alpha chains and two beta chains. In terms of tissue distribution, red blood cells.

Involved in oxygen transport from gills to the various peripheral tissues. In Oncorhynchus mykiss (Rainbow trout), this protein is Hemoglobin subunit beta-1 (hbb1).